We begin with the raw amino-acid sequence, 274 residues long: Remorin 4.2 (274 aa).

Basic and acidic residues predominate over residues 1 to 30; sequence MLTLYHQERSPDATSNDRDETPETVVREVH. Disordered regions lie at residues 1 to 71, 117 to 157, and 218 to 245; these read MLTL…EGEN, TDHE…TVQR, and AMEKTQNNVAKAQRKAEERRATAEAKRG. Polar residues-rich tracts occupy residues 61–71 and 145–156; these read RSATTMSEGEN and GPGQSRVGSTVQ. Residues 204 to 239 adopt a coiled-coil conformation; the sequence is MKKIERKLEERKAKAMEKTQNNVAKAQRKAEERRAT. Residues 231–245 are compositionally biased toward basic and acidic residues; that stretch reads RKAEERRATAEAKRG.

It belongs to the remorin family. Forms homodimer and heterodimer with REM4.1. Interacts with KIN11. In terms of processing, probably ubiquitinated and degraded by the 26S proteasome pathway. In terms of tissue distribution, predominantly detected in bud, stem, root, flower, silique, and leaves, and enhanced dramatically in senescence leaf.

The protein localises to the cell membrane. In terms of biological role, collaborates with REM4.1 to positively regulate the BCTV and BSCTV susceptibility. The protein is Remorin 4.2 of Arabidopsis thaliana (Mouse-ear cress).